The primary structure comprises 368 residues: Probable dual-specificity RNA methyltransferase RlmN (368 aa).

Glu-111 functions as the Proton acceptor in the catalytic mechanism. A Radical SAM core domain is found at Tyr-117 to Glu-355. A disulfide bond links Cys-124 and Cys-360. [4Fe-4S] cluster is bound by residues Cys-131, Cys-135, and Cys-138. Residues Gly-181–Glu-182, Ser-215, Ser-238–His-240, and Asn-317 contribute to the S-adenosyl-L-methionine site. The active-site S-methylcysteine intermediate is Cys-360.

It belongs to the radical SAM superfamily. RlmN family. It depends on [4Fe-4S] cluster as a cofactor.

It is found in the cytoplasm. It carries out the reaction adenosine(2503) in 23S rRNA + 2 reduced [2Fe-2S]-[ferredoxin] + 2 S-adenosyl-L-methionine = 2-methyladenosine(2503) in 23S rRNA + 5'-deoxyadenosine + L-methionine + 2 oxidized [2Fe-2S]-[ferredoxin] + S-adenosyl-L-homocysteine. The catalysed reaction is adenosine(37) in tRNA + 2 reduced [2Fe-2S]-[ferredoxin] + 2 S-adenosyl-L-methionine = 2-methyladenosine(37) in tRNA + 5'-deoxyadenosine + L-methionine + 2 oxidized [2Fe-2S]-[ferredoxin] + S-adenosyl-L-homocysteine. Specifically methylates position 2 of adenine 2503 in 23S rRNA and position 2 of adenine 37 in tRNAs. The polypeptide is Probable dual-specificity RNA methyltransferase RlmN (Corynebacterium diphtheriae (strain ATCC 700971 / NCTC 13129 / Biotype gravis)).